Reading from the N-terminus, the 85-residue chain is MAVKIRLARHGAKGKPFYRIVVADARSPRDGKFIDRVGTYDPRKEPSEIKVDAEKAREWLRKGAQPTDQVRNLLRISGVLEEQKG.

The protein belongs to the bacterial ribosomal protein bS16 family.

This Rubrobacter xylanophilus (strain DSM 9941 / JCM 11954 / NBRC 16129 / PRD-1) protein is Small ribosomal subunit protein bS16.